Here is a 131-residue protein sequence, read N- to C-terminus: Phosphoribosyl-ATP pyrophosphatase 2 (131 aa).

Residues 105–131 (RIGKPAAPHATRRPVIPQEARAVRKHR) form a disordered region.

The protein belongs to the PRA-PH family.

The protein localises to the cytoplasm. It catalyses the reaction 1-(5-phospho-beta-D-ribosyl)-ATP + H2O = 1-(5-phospho-beta-D-ribosyl)-5'-AMP + diphosphate + H(+). The protein operates within amino-acid biosynthesis; L-histidine biosynthesis; L-histidine from 5-phospho-alpha-D-ribose 1-diphosphate: step 2/9. The chain is Phosphoribosyl-ATP pyrophosphatase 2 (hisE2) from Rhodopseudomonas palustris (strain ATCC BAA-98 / CGA009).